Here is a 969-residue protein sequence, read N- to C-terminus: RNA polymerase-associated protein RapA (969 aa).

A Helicase ATP-binding domain is found at 164–334 (EVGRRHAPRV…FARLRLLDSD (171 aa)). An ATP-binding site is contributed by 177 to 184 (DEVGLGKT). Positions 280-283 (DEAH) match the DEAH box motif. One can recognise a Helicase C-terminal domain in the interval 492–668 (RVNWLLEKLK…GSNEALDDVI (177 aa)).

It belongs to the SNF2/RAD54 helicase family. RapA subfamily. In terms of assembly, interacts with the RNAP. Has a higher affinity for the core RNAP than for the holoenzyme. Its ATPase activity is stimulated by binding to RNAP.

Transcription regulator that activates transcription by stimulating RNA polymerase (RNAP) recycling in case of stress conditions such as supercoiled DNA or high salt concentrations. Probably acts by releasing the RNAP, when it is trapped or immobilized on tightly supercoiled DNA. Does not activate transcription on linear DNA. Probably not involved in DNA repair. This is RNA polymerase-associated protein RapA from Vibrio vulnificus (strain CMCP6).